The primary structure comprises 61 residues: Bacteriocin leucocin-A (61 aa).

A propeptide spanning residues 1-24 (MMNMKPTESYEQLDNSALEQVVGG) is cleaved from the precursor. Residues cysteine 33 and cysteine 38 are joined by a disulfide bond.

It belongs to the bacteriocin class IIA/YGNGV family.

Its subcellular location is the secreted. Its function is as follows. Inhibits a wide spectrum of lactic acid bacteria. In Leuconostoc gelidum, this protein is Bacteriocin leucocin-A (lcnA).